The primary structure comprises 218 residues: uncharacterized protein (218 aa).

The next 4 helical transmembrane spans lie at 10-30 (IPPL…SLGI), 55-75 (IGVG…GYSI), 147-167 (VTGG…AGMA), and 175-195 (FSWI…ILLR).

The protein belongs to the DedA family.

It localises to the cell membrane. This is an uncharacterized protein from Mycobacterium tuberculosis (strain CDC 1551 / Oshkosh).